Consider the following 40-residue polypeptide: Peroxisomal LYS1 stabilizing protein 1 (40 aa).

The span at 1 to 10 shows a compositional bias: polar residues; the sequence is MTAKTKQSWN. The disordered stretch occupies residues 1–20; that stretch reads MTAKTKQSWNKGIWENGKQG.

The protein resides in the cytoplasm. The protein localises to the cytosol. Its subcellular location is the peroxisome matrix. Modulates the lysine biosynthesis pathway, possibly by stabilizing the lysine biosynthesis LYS1 protein in lysine-deplete conditions. The sequence is that of Peroxisomal LYS1 stabilizing protein 1 from Saccharomyces cerevisiae (strain ATCC 204508 / S288c) (Baker's yeast).